Here is a 116-residue protein sequence, read N- to C-terminus: Large ribosomal subunit protein bL17 (116 aa).

The protein belongs to the bacterial ribosomal protein bL17 family. Part of the 50S ribosomal subunit. Contacts proteins L3 and L32.

Functionally, binds to the 23S rRNA. This Deinococcus radiodurans (strain ATCC 13939 / DSM 20539 / JCM 16871 / CCUG 27074 / LMG 4051 / NBRC 15346 / NCIMB 9279 / VKM B-1422 / R1) protein is Large ribosomal subunit protein bL17.